A 204-amino-acid polypeptide reads, in one-letter code: MADKGLLLVLSGPSGVGKGTVKSAIVEHKVFPFEYSVSMTTRKPREGEVNGKDYYFVTREEFKQAIADNQLLEYNEYVGNLYGTPLGPVKEMLAAGKDVLLEIDVNGARTVRQQMPEGVFIFLTPPDLHTLRDRLEHRGTESEDVIRGRIAQARKEILVMQDYDYAVVNDTVANAVNHIKAIVDAEHVSVRRVIDDYRKMVKED.

Positions 5 to 184 (GLLLVLSGPS…AVNHIKAIVD (180 aa)) constitute a Guanylate kinase-like domain. ATP is bound at residue 12 to 19 (GPSGVGKG).

It belongs to the guanylate kinase family.

The protein resides in the cytoplasm. The enzyme catalyses GMP + ATP = GDP + ADP. Essential for recycling GMP and indirectly, cGMP. This Lactobacillus delbrueckii subsp. bulgaricus (strain ATCC 11842 / DSM 20081 / BCRC 10696 / JCM 1002 / NBRC 13953 / NCIMB 11778 / NCTC 12712 / WDCM 00102 / Lb 14) protein is Guanylate kinase.